Consider the following 85-residue polypeptide: Beta-insect depressant toxin Lqh-dprIT3e (85 aa).

The signal sequence occupies residues 1 to 21 (MKLLLLLTISASMLIEGLVNA). The LCN-type CS-alpha/beta domain occupies 22 to 82 (DGYIRGGDGC…EWDYETDTCG (61 aa)). Cystine bridges form between C31–C81, C35–C56, C42–C63, and C46–C65. Glycine amide is present on G82.

The protein belongs to the long (4 C-C) scorpion toxin superfamily. Sodium channel inhibitor family. Beta subfamily. As to expression, expressed by the venom gland.

It is found in the secreted. Depressant insect beta-toxins cause a transient contraction paralysis followed by a slow flaccid paralysis. They bind voltage-independently at site-4 of sodium channels (Nav) and block action potentials, primarily by depolarizing the axonal membrane and suppressing the sodium current. This depressant toxin is active only on insects. It is found in a relatively small amount in the venom. The polypeptide is Beta-insect depressant toxin Lqh-dprIT3e (Leiurus hebraeus (Hebrew deathstalker scorpion)).